A 489-amino-acid chain; its full sequence is Putative BTB/POZ domain-containing protein R773 (489 aa).

Residues 3-73 (SNIELVITDE…GNTSYKFQDK (71 aa)) enclose the BTB domain.

Belongs to the mimivirus BTB/WD family.

In Acanthamoeba polyphaga (Amoeba), this protein is Putative BTB/POZ domain-containing protein R773.